We begin with the raw amino-acid sequence, 487 residues long: Serine carboxypeptidase-like 37 (487 aa).

A signal peptide spans 1–28; sequence MVKQQDWSVTTCVLLFLFLASQIHCRSG. N-linked (GlcNAc...) asparagine glycosylation is present at Asn-105. Cystine bridges form between Cys-120–Cys-368, Cys-280–Cys-291, and Cys-315–Cys-336. The active site involves Ser-215. 3 N-linked (GlcNAc...) asparagine glycosylation sites follow: Asn-317, Asn-357, and Asn-375. Residue Asp-407 is part of the active site. 2 N-linked (GlcNAc...) asparagine glycosylation sites follow: Asn-423 and Asn-449. His-460 is a catalytic residue.

Belongs to the peptidase S10 family. In terms of tissue distribution, expressed in seedlings, roots, leaves, stems, flowers and siliques.

The protein localises to the secreted. Functionally, probable carboxypeptidase. In Arabidopsis thaliana (Mouse-ear cress), this protein is Serine carboxypeptidase-like 37 (SCPL37).